A 358-amino-acid chain; its full sequence is Acyl-CoA Delta-12 desaturase (358 aa).

A run of 2 helical transmembrane segments spans residues 30-50 and 55-75; these read IILY…AMFY and TVFY…AGSH. Fe cation-binding residues include His75, His80, His112, His115, and His116. Positions 75–80 match the Histidine box-1 motif; that stretch reads HRLWAH. The Histidine box-2 motif lies at 112–116; it reads HRVHH. A run of 2 helical transmembrane segments spans residues 175 to 195 and 200 to 220; these read TFFA…YFWG and TAFF…TFLV. Residues His225, His254, His257, and His258 each coordinate Fe cation. The Histidine box-3 signature appears at 254-258; it reads HNYHH.

It belongs to the fatty acid desaturase type 1 family. Fe(2+) is required as a cofactor.

It is found in the membrane. The enzyme catalyses (9Z)-octadecenoyl-CoA + 2 Fe(II)-[cytochrome b5] + O2 + 2 H(+) = (9Z,12Z)-octadecadienoyl-CoA + 2 Fe(III)-[cytochrome b5] + 2 H2O. The catalysed reaction is (9Z)-hexadecenoyl-CoA + 2 Fe(II)-[cytochrome b5] + O2 + 2 H(+) = (9Z,12Z)-hexadecadienoyl-CoA + 2 Fe(III)-[cytochrome b5] + 2 H2O. Catalyzes the formation of a Delta12 double bond, acting on monounsaturated fatty acyl substrates like palmitoleoyl-CoA ((9Z)-hexadecenoyl-CoA) and oleoyl-CoA ((9Z)-octadecenoyl-CoA) with higher desaturation activity on (9Z)-octadecenoyl-CoA than (9Z)-hexadecenoyl-CoA. Requires preexisting cis double bond at the Delta9 position of fatty acyls to be able to insert the Delta12 double bond. Delta12-desaturation of (9Z)-octadecenoyl-CoA in insects produces (9Z,12Z)-octadecadienoyl-CoA (linoleoyl-CoA) which may be used to supply precursors of crucial mediators of immunity and reproduction and other essential functions. The polypeptide is Acyl-CoA Delta-12 desaturase (Tribolium castaneum (Red flour beetle)).